Here is a 531-residue protein sequence, read N- to C-terminus: Protein MGF 505-1R (531 aa).

It belongs to the asfivirus MGF 505 family.

In terms of biological role, plays a role in virus cell tropism, and may be required for efficient virus replication in macrophages. This Ornithodoros (relapsing fever ticks) protein is Protein MGF 505-1R.